Reading from the N-terminus, the 835-residue chain is Phenylalanine--tRNA ligase beta subunit (835 aa).

The region spanning 44–158 (GPVDGPLTVG…LPGADGADVL (115 aa)) is the tRNA-binding domain. In terms of domain architecture, B5 spans 414-493 (WSLPPIRIAV…RLEGLEVIRS (80 aa)). The Mg(2+) site is built by D471, D477, E480, and E481. One can recognise an FDX-ACB domain in the interval 741–834 (SPFPAVLQDV…AAERVGATLR (94 aa)).

Belongs to the phenylalanyl-tRNA synthetase beta subunit family. Type 1 subfamily. Tetramer of two alpha and two beta subunits. The cofactor is Mg(2+).

The protein localises to the cytoplasm. The enzyme catalyses tRNA(Phe) + L-phenylalanine + ATP = L-phenylalanyl-tRNA(Phe) + AMP + diphosphate + H(+). The protein is Phenylalanine--tRNA ligase beta subunit of Mycobacterium leprae (strain TN).